Here is a 517-residue protein sequence, read N- to C-terminus: Cobyric acid synthase (517 aa).

The 201-residue stretch at 253 to 453 (EVEIAVIKLP…IHGILDNDSL (201 aa)) folds into the GATase cobBQ-type domain. Cysteine 334 serves as the catalytic Nucleophile. Histidine 445 is an active-site residue.

It belongs to the CobB/CobQ family. CobQ subfamily.

Its pathway is cofactor biosynthesis; adenosylcobalamin biosynthesis. Functionally, catalyzes amidations at positions B, D, E, and G on adenosylcobyrinic A,C-diamide. NH(2) groups are provided by glutamine, and one molecule of ATP is hydrogenolyzed for each amidation. This chain is Cobyric acid synthase, found in Moorella thermoacetica (strain ATCC 39073 / JCM 9320).